We begin with the raw amino-acid sequence, 238 residues long: Ribosomal RNA small subunit methyltransferase G (238 aa).

S-adenosyl-L-methionine contacts are provided by residues G75, L80, 126-127 (AE), and R142.

It belongs to the methyltransferase superfamily. RNA methyltransferase RsmG family.

The protein localises to the cytoplasm. Its function is as follows. Specifically methylates the N7 position of guanine in position 518 of 16S rRNA. This Streptomyces avermitilis (strain ATCC 31267 / DSM 46492 / JCM 5070 / NBRC 14893 / NCIMB 12804 / NRRL 8165 / MA-4680) protein is Ribosomal RNA small subunit methyltransferase G.